Reading from the N-terminus, the 432-residue chain is Adenylosuccinate synthetase (432 aa).

GTP is bound by residues 13 to 19 (GDEGKGK) and 41 to 43 (GHT). Aspartate 14 functions as the Proton acceptor in the catalytic mechanism. The Mg(2+) site is built by aspartate 14 and glycine 41. Residues 14–17 (DEGK), 39–42 (NAGH), threonine 130, arginine 144, glutamine 225, threonine 240, and arginine 304 each bind IMP. The active-site Proton donor is histidine 42. 300 to 306 (AVTGRPR) contributes to the substrate binding site. GTP-binding positions include arginine 306, 332–334 (KLD), and 415–417 (STG).

It belongs to the adenylosuccinate synthetase family. Homodimer. Requires Mg(2+) as cofactor.

It is found in the cytoplasm. It carries out the reaction IMP + L-aspartate + GTP = N(6)-(1,2-dicarboxyethyl)-AMP + GDP + phosphate + 2 H(+). It functions in the pathway purine metabolism; AMP biosynthesis via de novo pathway; AMP from IMP: step 1/2. Its function is as follows. Plays an important role in the de novo pathway of purine nucleotide biosynthesis. Catalyzes the first committed step in the biosynthesis of AMP from IMP. This chain is Adenylosuccinate synthetase, found in Mannheimia succiniciproducens (strain KCTC 0769BP / MBEL55E).